We begin with the raw amino-acid sequence, 6486 residues long: Tyrocidine synthase 3 (6486 aa).

Positions 466–1038 are domain 1 (asparagine-activating); that stretch reads IFELIAEQAS…VAELARFLSR (573 aa). Carrier domains lie at 965–1040, 2002–2077, 3040–3115, 4075–4150, 5119–5194, and 6162–6237; these read APQN…SRSE, APRN…AAAR, APTN…ATSG, AAQN…AESA, APRS…EETA, and APRN…THKR. O-(pantetheine 4'-phosphoryl)serine is present on residues S1000, S2037, S3075, S4110, S5154, and S6197. A domain 2 (glutamine-activating) region spans residues 1521 to 2070; it reads YEEYALTYRE…FESPTIAGLA (550 aa). Residues 2536–3113 are domain 3 (tyrosine-activating); sequence NKTLQALFEE…IKALAQYVAT (578 aa). The segment at 3590-4149 is domain 4 (valine-activating); the sequence is EHAAVVMDGQ…HELAAHIAES (560 aa). Positions 4606–5203 are domain 5 (ornithine-activating); it reads YPTDKTFQKL…AKGNVFSIEP (598 aa). Residues 5658 to 6245 are domain 6 (leucine-activating); it reads LHQLFEEQVD…KRFESRYGTA (588 aa).

Belongs to the ATP-dependent AMP-binding enzyme family. As to quaternary structure, large multienzyme complex of TycA, TycB and TycC. Pantetheine 4'-phosphate is required as a cofactor.

It functions in the pathway antibiotic biosynthesis; tyrocidine biosynthesis. Incorporates six amino acids (for tyrocidine A, Asn, Gln, Tyr, Val, Orn, and Leu) in their L-configuration into the peptide product. In Brevibacillus parabrevis, this protein is Tyrocidine synthase 3 (tycC).